A 359-amino-acid polypeptide reads, in one-letter code: tRNA-specific 2-thiouridylase MnmA (359 aa).

ATP-binding positions include 9 to 16 (GISGGVDS) and methionine 35. The tract at residues 95-97 (NPD) is interaction with target base in tRNA. The active-site Nucleophile is the cysteine 100. A disulfide bridge connects residues cysteine 100 and cysteine 197. Residue glycine 124 coordinates ATP. Residues 147-149 (KDQ) form an interaction with tRNA region. The Cysteine persulfide intermediate role is filled by cysteine 197. Residues 309–310 (RY) are interaction with tRNA.

The protein belongs to the MnmA/TRMU family.

The protein localises to the cytoplasm. It carries out the reaction S-sulfanyl-L-cysteinyl-[protein] + uridine(34) in tRNA + AH2 + ATP = 2-thiouridine(34) in tRNA + L-cysteinyl-[protein] + A + AMP + diphosphate + H(+). Catalyzes the 2-thiolation of uridine at the wobble position (U34) of tRNA, leading to the formation of s(2)U34. This chain is tRNA-specific 2-thiouridylase MnmA, found in Francisella tularensis subsp. tularensis (strain FSC 198).